Reading from the N-terminus, the 176-residue chain is MSRVAKAPVAIPAGVEVTLNEQTITVKGTKGSLTRVINADVSVVVENNEIKCSSVEGVKTNAQAGTARALINNMVVGVTAGFEKKLQLIGVGYRAKIAGKGVDLTLGFSHPLVHELPDGVTAVCPSQTEIVLSGTDKQLVGQVAAEIRGYRPPEPYKGKGVRYADEQVRRKEAKKK.

The protein belongs to the universal ribosomal protein uL6 family. As to quaternary structure, part of the 50S ribosomal subunit.

Functionally, this protein binds to the 23S rRNA, and is important in its secondary structure. It is located near the subunit interface in the base of the L7/L12 stalk, and near the tRNA binding site of the peptidyltransferase center. In Shewanella sediminis (strain HAW-EB3), this protein is Large ribosomal subunit protein uL6.